We begin with the raw amino-acid sequence, 452 residues long: mRNA export factor ICP27 homolog (452 aa).

Residues 42–164 (EAIGSTPGED…RNDQTHDESY (123 aa)) are disordered. Basic and acidic residues predominate over residues 98-107 (SNHHGGRDVE). A compositionally biased stretch (basic residues) spans 129-144 (SRKHRDRSLSNRRRRP). Over residues 154–164 (ERNDQTHDESY) the composition is skewed to basic and acidic residues. Positions 335, 417, 421, and 426 each coordinate Zn(2+). Residues 335–426 (CLLLNRDNDL…HQRECGRVEC (92 aa)) form a CHC2-type zinc finger.

The protein belongs to the HHV-1 ICP27 protein family. As to quaternary structure, homodimer. Homodimerization is required for transactivation. Associates in a complex with RNA, and host export factors NXF1/TAP and ALYREF; these interactions allow nuclear export of viral transcripts. Interacts with three host shuttling SR proteins SRSF1, SRSF3 and SRSF7. Interacts with host SRPK1. Interacts with IE62; this interaction enhances IE62 transactivation. In terms of processing, phosphorylated in vitro by SRPK1.

Its subcellular location is the host cytoplasm. It is found in the host nucleus. In terms of biological role, multifunctional regulator of the expression of viral genes that mediates nuclear export of viral intronless mRNAs. This immediate early (EI) protein promotes the nuclear export of viral intronless mRNAs by interacting with mRNAs and host NXF1/TAP. This Varicella-zoster virus (strain Dumas) (HHV-3) protein is mRNA export factor ICP27 homolog.